The primary structure comprises 158 residues: Transcriptional repressor NrdR (158 aa).

A zinc finger spans residues 3-34; the sequence is CPSCQNTDSRVLESRAAEGGRSVRRRRECLNC. The 91-residue stretch at 49-139 folds into the ATP-cone domain; it reads ITVIKRNGHR…VYRHFRSVSD (91 aa).

Belongs to the NrdR family. The cofactor is Zn(2+).

Functionally, negatively regulates transcription of bacterial ribonucleotide reductase nrd genes and operons by binding to NrdR-boxes. This is Transcriptional repressor NrdR from Synechococcus sp. (strain CC9311).